Reading from the N-terminus, the 108-residue chain is Large ribosomal subunit protein eL30 (108 aa).

It belongs to the eukaryotic ribosomal protein eL30 family.

This chain is Large ribosomal subunit protein eL30 (rpl30e), found in Saccharolobus solfataricus (strain ATCC 35092 / DSM 1617 / JCM 11322 / P2) (Sulfolobus solfataricus).